The following is a 360-amino-acid chain: Mannitol-1-phosphate 5-dehydrogenase (360 aa).

6–17 (ALHFGAGNIGRG) contributes to the NAD(+) binding site.

This sequence belongs to the mannitol dehydrogenase family.

It catalyses the reaction D-mannitol 1-phosphate + NAD(+) = beta-D-fructose 6-phosphate + NADH + H(+). In Mycoplasmopsis pulmonis (strain UAB CTIP) (Mycoplasma pulmonis), this protein is Mannitol-1-phosphate 5-dehydrogenase.